Reading from the N-terminus, the 73-residue chain is Omega-hexatoxin-Ar1b (73 aa).

Positions 1–22 are cleaved as a signal peptide; the sequence is MNTATGFIVLLVLATVLGCIEA. A propeptide spanning residues 23–37 is cleaved from the precursor; sequence GESHVREDAMGRARR. 3 cysteine pairs are disulfide-bonded: C40–C54, C47–C58, and C53–C72.

Belongs to the neurotoxin 08 (Shiva) family. 01 (omega toxin) subfamily. In terms of tissue distribution, expressed by the venom gland.

The protein resides in the secreted. Its function is as follows. Insecticidal toxin that reversibly and voltage-independently blocks both mid-low- (M-LVA) and high-voltage-activated (HVA) calcium channels (Cav) in cockroach DUM neurons. Also causes a modest block of insect sodium channel currents (Nav). Induces potent excitatory symptoms, followed by flaccid paralysis leading to death in house crickets. The polypeptide is Omega-hexatoxin-Ar1b (Atrax robustus (Sydney funnel-web spider)).